A 308-amino-acid polypeptide reads, in one-letter code: Ornithine carbamoyltransferase (308 aa).

Residues 52 to 55 (STRT), Gln-79, Arg-103, and 130 to 133 (HPLQ) each bind carbamoyl phosphate. L-ornithine is bound by residues Asn-162, Asp-224, and 228 to 229 (SM). Residues 264–265 (CL) and Arg-292 contribute to the carbamoyl phosphate site.

This sequence belongs to the aspartate/ornithine carbamoyltransferase superfamily. OTCase family.

The protein localises to the cytoplasm. The catalysed reaction is carbamoyl phosphate + L-ornithine = L-citrulline + phosphate + H(+). The protein operates within amino-acid biosynthesis; L-arginine biosynthesis; L-arginine from L-ornithine and carbamoyl phosphate: step 1/3. Reversibly catalyzes the transfer of the carbamoyl group from carbamoyl phosphate (CP) to the N(epsilon) atom of ornithine (ORN) to produce L-citrulline. This Pyrobaculum calidifontis (strain DSM 21063 / JCM 11548 / VA1) protein is Ornithine carbamoyltransferase.